The primary structure comprises 37 residues: Large ribosomal subunit protein bL36A (37 aa).

It belongs to the bacterial ribosomal protein bL36 family.

The protein is Large ribosomal subunit protein bL36A of Neisseria meningitidis serogroup C (strain 053442).